The following is a 315-amino-acid chain: Pantothenate kinase (315 aa).

Residue G94 to S101 participates in ATP binding.

This sequence belongs to the prokaryotic pantothenate kinase family.

It localises to the cytoplasm. It catalyses the reaction (R)-pantothenate + ATP = (R)-4'-phosphopantothenate + ADP + H(+). It participates in cofactor biosynthesis; coenzyme A biosynthesis; CoA from (R)-pantothenate: step 1/5. This Citrobacter koseri (strain ATCC BAA-895 / CDC 4225-83 / SGSC4696) protein is Pantothenate kinase.